A 307-amino-acid polypeptide reads, in one-letter code: tRNA-cytidine(32) 2-sulfurtransferase (307 aa).

The PP-loop motif signature appears at 44–49 (SGGKDS). Positions 119, 122, and 210 each coordinate [4Fe-4S] cluster.

It belongs to the TtcA family. As to quaternary structure, homodimer. Mg(2+) is required as a cofactor. It depends on [4Fe-4S] cluster as a cofactor.

It is found in the cytoplasm. It carries out the reaction cytidine(32) in tRNA + S-sulfanyl-L-cysteinyl-[cysteine desulfurase] + AH2 + ATP = 2-thiocytidine(32) in tRNA + L-cysteinyl-[cysteine desulfurase] + A + AMP + diphosphate + H(+). The protein operates within tRNA modification. In terms of biological role, catalyzes the ATP-dependent 2-thiolation of cytidine in position 32 of tRNA, to form 2-thiocytidine (s(2)C32). The sulfur atoms are provided by the cysteine/cysteine desulfurase (IscS) system. This chain is tRNA-cytidine(32) 2-sulfurtransferase, found in Aliivibrio fischeri (strain ATCC 700601 / ES114) (Vibrio fischeri).